The following is a 230-amino-acid chain: Secretory carrier-associated membrane protein 4 (230 aa).

The Cytoplasmic portion of the chain corresponds to 1 to 39 (MSGKENNFPPLPKFIPLKPCFYQNFSDEIPIEHQVLVKR). Helical transmembrane passes span 40–60 (IYRLWLFYCATLGVNLVACLA), 61–81 (WWIAGGSGANFGLALLWLLLF), 105–125 (FMAFFFIFGAQFILTIIQAVG), and 149–169 (VVMLLPAIMFSMSAAMMAVMI). Residues 170 to 230 (MKVHSIYRGT…SYPASGGQWP (61 aa)) lie on the Cytoplasmic side of the membrane. T194 carries the phosphothreonine modification. Residues 208–230 (FSGNSLPEYPTVPSYPASGGQWP) form a disordered region.

This sequence belongs to the SCAMP family.

It localises to the membrane. Probably involved in membrane protein trafficking. The protein is Secretory carrier-associated membrane protein 4 (SCAMP4) of Bos taurus (Bovine).